A 156-amino-acid polypeptide reads, in one-letter code: ATP synthase subunit b (156 aa).

A helical membrane pass occupies residues 7-26; the sequence is LIGQLIAFALFVAFCMKYVW.

It belongs to the ATPase B chain family. In terms of assembly, F-type ATPases have 2 components, F(1) - the catalytic core - and F(0) - the membrane proton channel. F(1) has five subunits: alpha(3), beta(3), gamma(1), delta(1), epsilon(1). F(0) has three main subunits: a(1), b(2) and c(10-14). The alpha and beta chains form an alternating ring which encloses part of the gamma chain. F(1) is attached to F(0) by a central stalk formed by the gamma and epsilon chains, while a peripheral stalk is formed by the delta and b chains.

It localises to the cell inner membrane. Its function is as follows. F(1)F(0) ATP synthase produces ATP from ADP in the presence of a proton or sodium gradient. F-type ATPases consist of two structural domains, F(1) containing the extramembraneous catalytic core and F(0) containing the membrane proton channel, linked together by a central stalk and a peripheral stalk. During catalysis, ATP synthesis in the catalytic domain of F(1) is coupled via a rotary mechanism of the central stalk subunits to proton translocation. In terms of biological role, component of the F(0) channel, it forms part of the peripheral stalk, linking F(1) to F(0). In Haemophilus ducreyi (strain 35000HP / ATCC 700724), this protein is ATP synthase subunit b.